Here is a 205-residue protein sequence, read N- to C-terminus: Putative 3-methyladenine DNA glycosylase (205 aa).

Belongs to the DNA glycosylase MPG family.

The chain is Putative 3-methyladenine DNA glycosylase from Bacillus cereus (strain ZK / E33L).